The primary structure comprises 85 residues: Large ribosomal subunit protein bL27 (85 aa).

The tract at residues 1-21 (MAHKKAGGSTRNGRDSNAQRL) is disordered. The segment covering 9–19 (STRNGRDSNAQ) has biased composition (polar residues).

This sequence belongs to the bacterial ribosomal protein bL27 family.

In Pectobacterium atrosepticum (strain SCRI 1043 / ATCC BAA-672) (Erwinia carotovora subsp. atroseptica), this protein is Large ribosomal subunit protein bL27.